The following is an 83-amino-acid chain: Evasin P1090 (83 aa).

The first 24 residues, 1-24 (MEVKIFAFLQIAVLIAFSLHLASA), serve as a signal peptide directing secretion. Intrachain disulfides connect Cys-44/Cys-63, Cys-48/Cys-65, and Cys-59/Cys-76. An N-linked (GlcNAc...) asparagine glycan is attached at Asn-47. N-linked (GlcNAc...) asparagine glycosylation is present at Asn-70.

Its subcellular location is the secreted. Salivary chemokine-binding protein which binds to host chemokines CXCL1, CXCL2, CXCL3, CXCL5, CXCL6, CXCL10, CXCL11 and CXCL13. The chain is Evasin P1090 from Ixodes ricinus (Common tick).